We begin with the raw amino-acid sequence, 144 residues long: Catabolic 3-dehydroquinase (144 aa).

The active-site Proton acceptor is the tyrosine 24. Substrate contacts are provided by asparagine 76, histidine 82, and aspartate 89. Histidine 102 (proton donor) is an active-site residue. Residues 103-104 (IT) and arginine 113 each bind substrate.

It belongs to the type-II 3-dehydroquinase family. Homododecamer. Adopts a ring-like structure, composed of an arrangement of two hexameric rings stacked on top of one another.

The catalysed reaction is 3-dehydroquinate = 3-dehydroshikimate + H2O. It participates in aromatic compound metabolism; 3,4-dihydroxybenzoate biosynthesis; 3,4-dihydroxybenzoate from 3-dehydroquinate: step 1/2. Its function is as follows. Is involved in the catabolism of quinate. Allows the utilization of quinate as carbon source via the beta-ketoadipate pathway. This chain is Catabolic 3-dehydroquinase, found in Debaryomyces hansenii (strain ATCC 36239 / CBS 767 / BCRC 21394 / JCM 1990 / NBRC 0083 / IGC 2968) (Yeast).